The chain runs to 262 residues: MGCCSSRSADSPASRVTRWRSTGIVALRDARLKVVPNEVLQVGNSLRILDLTNNKIAEIPQEVGTLVNMQRLVLAGNLVESIPANIGYLRNLKILTLDRNKISVLPEELGSLSNLQQLSISQNSLSRLPKSVGDLRNMLLLNVSDNKLIALPESIGGCSSLEELQANGNSIEDVPSSICNLVCLKSLSLNGNKIRQLPQNLLKDCKALQNISLHDNPISMDQFQQMDGFTEFEARRRKKFDKQIDSNVMMSSTALDEGIDLN.

9 LRR repeats span residues 19 to 42 (WRST…VLQV), 43 to 66 (GNSL…VGTL), 68 to 89 (NMQR…IGYL), 90 to 112 (RNLK…LGSL), 113 to 135 (SNLQ…VGDL), 137 to 158 (NMLL…IGGC), 159 to 181 (SSLE…ICNL), 182 to 204 (VCLK…LLKD), and 206 to 231 (KALQ…GFTE).

The protein belongs to the SHOC2 family. As to expression, widely expressed and preferentially in leaf sheathes.

Functionally, leucine-rich repeat protein that likely mediates protein interactions, possibly in the context of signal transduction. The polypeptide is Plant intracellular Ras-group-related LRR protein 7 (IRL7) (Oryza sativa subsp. japonica (Rice)).